A 172-amino-acid chain; its full sequence is Adenine phosphoribosyltransferase (172 aa).

Belongs to the purine/pyrimidine phosphoribosyltransferase family. Homodimer.

Its subcellular location is the cytoplasm. It catalyses the reaction AMP + diphosphate = 5-phospho-alpha-D-ribose 1-diphosphate + adenine. It functions in the pathway purine metabolism; AMP biosynthesis via salvage pathway; AMP from adenine: step 1/1. Its function is as follows. Catalyzes a salvage reaction resulting in the formation of AMP, that is energically less costly than de novo synthesis. The chain is Adenine phosphoribosyltransferase from Streptococcus equi subsp. zooepidemicus (strain H70).